The primary structure comprises 173 residues: UPF0316 protein Amet_0954 (173 aa).

Transmembrane regions (helical) follow at residues 3–23 (LVLGYLFIFVARVTDVGMGTV), 38–58 (AIGFVESIIYILAIGKVLEAL), and 61–81 (PVNILVYATGFAAGNYVGIYI).

This sequence belongs to the UPF0316 family.

The protein resides in the cell membrane. The chain is UPF0316 protein Amet_0954 from Alkaliphilus metalliredigens (strain QYMF).